The primary structure comprises 305 residues: Methionyl-tRNA formyltransferase (305 aa).

111 to 114 is a binding site for (6S)-5,6,7,8-tetrahydrofolate; sequence SLLP.

It belongs to the Fmt family.

The enzyme catalyses L-methionyl-tRNA(fMet) + (6R)-10-formyltetrahydrofolate = N-formyl-L-methionyl-tRNA(fMet) + (6S)-5,6,7,8-tetrahydrofolate + H(+). Its function is as follows. Attaches a formyl group to the free amino group of methionyl-tRNA(fMet). The formyl group appears to play a dual role in the initiator identity of N-formylmethionyl-tRNA by promoting its recognition by IF2 and preventing the misappropriation of this tRNA by the elongation apparatus. This chain is Methionyl-tRNA formyltransferase, found in Campylobacter jejuni subsp. jejuni serotype O:2 (strain ATCC 700819 / NCTC 11168).